A 180-amino-acid polypeptide reads, in one-letter code: Acireductone dioxygenase (180 aa).

His-97, His-99, Glu-103, and His-141 together coordinate Fe(2+). Ni(2+) contacts are provided by His-97, His-99, Glu-103, and His-141.

Belongs to the acireductone dioxygenase (ARD) family. In terms of assembly, monomer. The cofactor is Fe(2+). It depends on Ni(2+) as a cofactor.

It carries out the reaction 1,2-dihydroxy-5-(methylsulfanyl)pent-1-en-3-one + O2 = 3-(methylsulfanyl)propanoate + CO + formate + 2 H(+). It catalyses the reaction 1,2-dihydroxy-5-(methylsulfanyl)pent-1-en-3-one + O2 = 4-methylsulfanyl-2-oxobutanoate + formate + 2 H(+). The protein operates within amino-acid biosynthesis; L-methionine biosynthesis via salvage pathway; L-methionine from S-methyl-5-thio-alpha-D-ribose 1-phosphate: step 5/6. In terms of biological role, catalyzes 2 different reactions between oxygen and the acireductone 1,2-dihydroxy-3-keto-5-methylthiopentene (DHK-MTPene) depending upon the metal bound in the active site. Fe-containing acireductone dioxygenase (Fe-ARD) produces formate and 2-keto-4-methylthiobutyrate (KMTB), the alpha-ketoacid precursor of methionine in the methionine recycle pathway. Ni-containing acireductone dioxygenase (Ni-ARD) produces methylthiopropionate, carbon monoxide and formate, and does not lie on the methionine recycle pathway. The protein is Acireductone dioxygenase of Cronobacter sakazakii (Enterobacter sakazakii).